The chain runs to 438 residues: MLRTHYSSEITEELNGKKVKVAGWVQEVKDLGGIKFIWIRDREGIVQVTAPKKKVPQEIFKLIPKLNSEDVIVVEGIVNFTPKAKLGFEIIPEKLEVISKAKTPLPLDPTGKVKAELDTRLDNRFMDLRNPRVMSIFKIRSSVFRATREFFYKEGFIEIHTPKIIATATEGGTELFPLKYFENDAFLAQSPQLYKQMMMSTGLDKVFEIGPIFRAEEHNTTRHLNEAWSIDAEMAFIESEEEVMDLLERLILYVINYVRENNEKELKILEFELNEPKKPFPRITYDEALEILSDLGKEIPWGEDIDTEGEKLLGKYMLENEGAELYFIYRYPSEAKPFYIMKYEDKPEVCKAFDLEYRGVEISSGGQREHRHDILVEQIREKGLNPESFEFYLRAFEYGMPPHGGFGLGAERLIMRMLDIGNIREVILFPRDRRRLVP.

E170 is an L-aspartate binding site. The tract at residues 192 to 195 (QLYK) is aspartate. Position 214 (R214) interacts with L-aspartate. Residues 214–216 (RAE), 222–224 (RHL), and E361 contribute to the ATP site. Residues E361 and S364 each coordinate Mg(2+). S364 and R368 together coordinate L-aspartate. 409-412 (GAER) provides a ligand contact to ATP.

It belongs to the class-II aminoacyl-tRNA synthetase family. Type 2 subfamily. In terms of assembly, homodimer. Requires Mg(2+) as cofactor.

The protein localises to the cytoplasm. It carries out the reaction tRNA(Asp) + L-aspartate + ATP = L-aspartyl-tRNA(Asp) + AMP + diphosphate. Functionally, catalyzes the attachment of L-aspartate to tRNA(Asp) in a two-step reaction: L-aspartate is first activated by ATP to form Asp-AMP and then transferred to the acceptor end of tRNA(Asp). This chain is Aspartate--tRNA(Asp) ligase, found in Pyrococcus abyssi (strain GE5 / Orsay).